An 85-amino-acid polypeptide reads, in one-letter code: Small ribosomal subunit protein uS17 (85 aa).

This sequence belongs to the universal ribosomal protein uS17 family. Part of the 30S ribosomal subunit.

One of the primary rRNA binding proteins, it binds specifically to the 5'-end of 16S ribosomal RNA. The chain is Small ribosomal subunit protein uS17 from Spiroplasma citri.